We begin with the raw amino-acid sequence, 206 residues long: Translation initiation factor IF-3 (206 aa).

The protein belongs to the IF-3 family. Monomer.

The protein localises to the cytoplasm. Its function is as follows. IF-3 binds to the 30S ribosomal subunit and shifts the equilibrium between 70S ribosomes and their 50S and 30S subunits in favor of the free subunits, thus enhancing the availability of 30S subunits on which protein synthesis initiation begins. The sequence is that of Translation initiation factor IF-3 from Chlorobium luteolum (strain DSM 273 / BCRC 81028 / 2530) (Pelodictyon luteolum).